A 44-amino-acid chain; its full sequence is Cuticle protein CP459 (44 aa).

Repeat copies occupy residues 3-20 and 27-44.

As to expression, calcified shell.

This Cancer pagurus (Rock crab) protein is Cuticle protein CP459.